The chain runs to 33 residues: Gastrin (33 aa).

The segment at 1–21 (ELEPQGPPHLGTDLSKKQGPW) is disordered. Pyrrolidone carboxylic acid is present on Q18. Position 28 is a sulfotyrosine (Y28). The residue at position 33 (F33) is a Phenylalanine amide.

This sequence belongs to the gastrin/cholecystokinin family.

It localises to the secreted. Gastrin stimulates the stomach mucosa to produce and secrete hydrochloric acid and the pancreas to secrete its digestive enzymes. It also stimulates smooth muscle contraction and increases blood circulation and water secretion in the stomach and intestine. The sequence is that of Gastrin (GAST) from Chinchilla chinchilla (Short-tailed chinchilla).